The following is a 317-amino-acid chain: MAPSSSSGLTFKLHPLVIVNISDHYTRVKTQLNPPASICASGHGSNNGEAMFQQNPRVYGCVIGVQRGRTVEIFNSFELLYDPSTQTLDRSFLEKKQELYKKVFPDFYILGWYSTGSDAEESDMHIHKALMDINESPVYVLLNPAINHTQKDLPVTIYESELHVIDGIPQLIFAHTSYTIETVEAERISVDHVAHLKPSDGGSAATQLAAHLTGIHSAIKMLNSRIRVLYQNLAAMQKGDKSCDNSVLRQVSSLLRRLPAMESERFQDNFLMEYNDKLLITYLAMITNCSSNMNEMVDKFNTAYDRNTRRGGRTAFM.

An MPN domain is found at Thr30 to Val164.

This sequence belongs to the peptidase M67A family. CSN6 subfamily. In terms of assembly, component of the CSN complex, probably composed of CSN1, CSN2, CSN3, CSN4, CSN5 (CSN5A or CSN5B), CSN6 (CSN6A or CSN6B), CSN7 and CSN8. Interacts with itself. In the complex, it probably interacts directly with CSN4 and CSN5A or CSN5B. Interacts with CSN7 (via C-terminal tail). Binds to the translation initiation factors TIF3E1.

Its subcellular location is the cytoplasm. The protein resides in the nucleus. In terms of biological role, component of the COP9 signalosome complex (CSN), a complex involved in various cellular and developmental processes such as photomorphogenesis and auxin and jasmonate responses. The CSN complex is an essential regulator of the ubiquitin (Ubl) conjugation pathway by mediating the deneddylation of the cullin subunits of SCF-type E3 ligase complexes, leading to decrease the Ubl ligase activity of SCF. It is involved in repression of photomorphogenesis in darkness by regulating the activity of COP1-containing Ubl ligase complexes. The complex is also required for degradation of PSIAA6 by regulating the activity of the Ubl ligase SCF-TIR complex. Essential for the structural integrity of the CSN holocomplex. The protein is COP9 signalosome complex subunit 6a of Arabidopsis thaliana (Mouse-ear cress).